The primary structure comprises 102 residues: Carboxysome shell protein CcmK2 (102 aa).

The BMC domain occupies 4 to 90 (AVGMIETLGF…PHENLEYVLP (87 aa)).

This sequence belongs to the bacterial microcompartments protein family. CcmK subfamily. In terms of assembly, homohexamer. Interacts with CcmO in the carboxysome. Interacts with CcmN.

Its subcellular location is the carboxysome. One of the shell proteins of the carboxysome, a polyhedral inclusion where RuBisCO (ribulose bisphosphate carboxylase, rbcL-rbcS) is sequestered. Assembles into hexamers which make sheets that form the facets of the polyhedral carboxysome. The hexamer central pore probably regulates metabolite flux. Functionally, the major shell protein of the carboxysome, a polyhedral inclusion where RuBisCO (ribulose bisphosphate carboxylase, rbcL-rbcS) is sequestered. Hexamers make sheets that form the facets of the polyhedral carboxysome. The shell is 4.5 nm thick, as observed for CcmK hexamers. Required for recruitment of CcmO to the pre-carboxysome. In PCC 7942 there are several CcmK paralogs with presumably functional differences; replacing the central pore residues (34-37) with those of either CcmK4 from this organism (Tyr-Met-Arg-Ala) or from an alpha-type carboxysome forming cyanobacterium (CsoS1 of P.marinus strain MIT 9313, Arg-Glu-Phe-Val) allows the bacterium to make carboxysomes, but the expression level is too low to know if the carboxysome is functional for CO(2) fixation. In terms of biological role, beta-carboxysome assembly initiates when soluble RuBisCO is condensed into a liquid matrix in a pre-carboxysome by the RbcS-like domains of probably both CcmM58 and CcmM35. CcmN interacts with the N-terminus of CcmM58, and then recruits the CcmK2 major shell protein via CcmN's encapsulation peptide. Shell formation requires CcmK proteins and CcmO. CcmL caps the otherwise elongated carboxysome. Once fully encapsulated carboxysomes are formed, they migrate within the cell probably via interactions with the cytoskeleton. The polypeptide is Carboxysome shell protein CcmK2 (Synechococcus elongatus (strain ATCC 33912 / PCC 7942 / FACHB-805) (Anacystis nidulans R2)).